The sequence spans 338 residues: Nicotinate-nucleotide--dimethylbenzimidazole phosphoribosyltransferase (338 aa).

Glutamate 305 (proton acceptor) is an active-site residue.

This sequence belongs to the CobT family. As to quaternary structure, homodimer.

The catalysed reaction is 5,6-dimethylbenzimidazole + nicotinate beta-D-ribonucleotide = alpha-ribazole 5'-phosphate + nicotinate + H(+). The protein operates within nucleoside biosynthesis; alpha-ribazole biosynthesis; alpha-ribazole from 5,6-dimethylbenzimidazole: step 1/2. Its function is as follows. Catalyzes the synthesis of alpha-ribazole-5'-phosphate from nicotinate mononucleotide (NAMN) and 5,6-dimethylbenzimidazole (DMB). The chain is Nicotinate-nucleotide--dimethylbenzimidazole phosphoribosyltransferase (cobU) from Sinorhizobium sp.